The chain runs to 844 residues: DNA mismatch repair protein MutS (844 aa).

ATP is bound at residue 602-609 (GPNMSGKS).

Belongs to the DNA mismatch repair MutS family.

In terms of biological role, this protein is involved in the repair of mismatches in DNA. It is possible that it carries out the mismatch recognition step. This protein has a weak ATPase activity. The sequence is that of DNA mismatch repair protein MutS from Streptococcus pneumoniae serotype 19F (strain G54).